The sequence spans 147 residues: Protein-export protein SecB 2 (147 aa).

It belongs to the SecB family. As to quaternary structure, homotetramer, a dimer of dimers. One homotetramer interacts with 1 SecA dimer.

Its subcellular location is the cytoplasm. Its function is as follows. One of the proteins required for the normal export of preproteins out of the cell cytoplasm. It is a molecular chaperone that binds to a subset of precursor proteins, maintaining them in a translocation-competent state. It also specifically binds to its receptor SecA. This Francisella tularensis subsp. holarctica (strain FTNF002-00 / FTA) protein is Protein-export protein SecB 2.